Here is a 118-residue protein sequence, read N- to C-terminus: BET1 homolog (118 aa).

The Cytoplasmic segment spans residues 1 to 94; it reads MRRAGLGEGV…LKILSRGSQT (94 aa). Residues 26–88 enclose the t-SNARE coiled-coil homology domain; sequence SACEEENERL…GKTMGKLKIL (63 aa). Ser-50 carries the post-translational modification Phosphoserine. A helical; Anchor for type IV membrane protein transmembrane segment spans residues 95 to 115; that stretch reads KLLCYMMLFSLFVFFIIYWII. Residues 116–118 lie on the Vesicular side of the membrane; that stretch reads KLR.

The protein belongs to the BET1 family. Interacts with SNARE complex members GOSR2, SEC22B and STX5. Interacts with LMAN1/ERGIC53. Interacts with STX17. Expressed in muscle.

Its subcellular location is the endoplasmic reticulum membrane. It localises to the golgi apparatus. The protein localises to the cis-Golgi network membrane. The protein resides in the golgi apparatus membrane. Functionally, required for vesicular transport from the ER to the Golgi complex. Functions as a SNARE involved in the docking process of ER-derived vesicles with the cis-Golgi membrane. The chain is BET1 homolog (BET1) from Homo sapiens (Human).